Consider the following 365-residue polypeptide: DNA repair protein rhp51 (365 aa).

Positions 1-25 (MADTEVEMQVSAADTNNNENGQAQS) are disordered. Residues 12-25 (AADTNNNENGQAQS) show a composition bias toward polar residues. 149 to 156 (GEFRTGKS) contributes to the ATP binding site.

The protein belongs to the RecA family. RAD51 subfamily. In terms of assembly, interacts with rad22, rad54, rdh54, rhp54, rti1, swi2 and swi5. Forms homooiligomers.

Its subcellular location is the nucleus. Its function is as follows. Required both for recombination and for the repair of DNA damage caused by X-rays. Binds to single and double-stranded DNA, in the presence of magnesium, and exhibits DNA-dependent ATPase activity. Promotes DNA strand annealing and strand exchange via DNA recombinase activity and forms helical nucleoprotein filaments. This Schizosaccharomyces pombe (strain 972 / ATCC 24843) (Fission yeast) protein is DNA repair protein rhp51 (rhp51).